A 1186-amino-acid polypeptide reads, in one-letter code: Syntaxin-binding protein 5-like (1186 aa).

Residue Met1 is modified to N-acetylmethionine. Residues 15–40 (ASSPGSGSSSGSNSGGGAGSGSVHPA) are disordered. The segment covering 16-26 (SSPGSGSSSGS) has biased composition (low complexity). 10 WD repeats span residues 74 to 107 (TALA…CYCQ), 114 to 153 (VLQL…SLKF), 158 to 194 (ITYC…GYVI), 213 to 247 (HLSD…ELRV), 253 to 285 (IHSI…PSRP), 307 to 349 (PILK…KAIT), 357 to 391 (IVEF…VVDL), 413 to 490 (TCTA…YKLK), 518 to 629 (QMIY…ELVI), and 643 to 705 (TSLA…IADN). Position 568 is a phosphothreonine (Thr568). Phosphoserine occurs at positions 574, 589, and 593. A Phosphothreonine modification is found at Thr596. The residue at position 599 (Ser599) is a Phosphoserine. Arg709 is subject to Omega-N-methylarginine. The span at 748 to 769 (TSDHVNGHCTSPTSQSCSSGKR) shows a compositional bias: polar residues. Residues 748–771 (TSDHVNGHCTSPTSQSCSSGKRLS) form a disordered region. Phosphoserine is present on residues Ser763, Ser765, Ser766, Ser771, Ser772, Ser793, Ser800, Ser812, Ser820, Ser822, and Ser823. 4 WD repeats span residues 832 to 889 (ITAL…SGTF), 898 to 969 (TFSC…QTCL), 974 to 1018 (ITET…LDVN), and 1032 to 1055 (CFTN…TYSQ). Thr1093 carries the phosphothreonine modification. Positions 1121–1181 (SIEGMKGAAG…HELMLKYKDK (61 aa)) constitute a v-SNARE coiled-coil homology domain.

This sequence belongs to the WD repeat L(2)GL family. In terms of assembly, interacts with STX1A and STX4. In terms of processing, phosphorylated, leading to STXBP5L increased turnover and subsequent de-repression of insulin secretion. Phosphorylated on serine residues in response to glucose or phorbol esters. Ubiquitinated by the E3 ligase SYVN1, leading to STXBP5L proteasomal degradation. In terms of tissue distribution, detected in kidney, hippocampus and lung carcinoma.

It localises to the cytoplasm. The protein localises to the cell membrane. Its subcellular location is the membrane. Its function is as follows. Plays a role in vesicle trafficking and exocytosis inhibition. In pancreatic beta-cells, inhibits insulin secretion probably by interacting with and regulating STX1A and STX4, key t-SNARE proteins involved in the fusion of insulin granules to the plasma membrane. Also plays a role in neurotransmitter release by inhibiting basal acetylcholine release from axon terminals and by preventing synaptic fatigue upon repetitive stimulation. Promotes as well axonal outgrowth. This Homo sapiens (Human) protein is Syntaxin-binding protein 5-like (STXBP5L).